Consider the following 397-residue polypeptide: MSPLLPSFPFAVLALADGSIFHGFSIGAPGETTGEVVFNTALTGYQEIITDPSYCSQIVTLTYPHIGNVGVNAQDAESDRIHAAGLVIKDLPKRVSNFRSEAPLDAYLTEAGVVGIAGIDTRKLTRILRDKGAQSGAIVAGKAGDDYETLGKKALELVKAFPGMAGLDLAKVVTTKKPYEWREGEWDLHGPNGTPAYRTLDTSKPTYKVVAYDFGVKRNILRMLTERGCELTVVPAQTSAAEVLAMQPDGVFLSNGPGDPEPCDYAIAAAKEIIEAGVPTFGICLGHQIMGLAAGAKTLKMKFGHHGANHPVKDLDTGRVAITSQNHGFAVDASTLPANVRVTHVSLFDGSLQGLAWKDKPAICFQGHPEASPGPHDVSYLFDRFMELMNAAKKEGK.

The interval M1–K204 is CPSase. Residues S53, G256, and G258 each contribute to the L-glutamine site. One can recognise a Glutamine amidotransferase type-1 domain in the interval K208 to E395. C284 (nucleophile) is an active-site residue. L-glutamine contacts are provided by L285, Q288, N326, G328, and F329. Catalysis depends on residues H368 and E370.

The protein belongs to the CarA family. Composed of two chains; the small (or glutamine) chain promotes the hydrolysis of glutamine to ammonia, which is used by the large (or ammonia) chain to synthesize carbamoyl phosphate. Tetramer of heterodimers (alpha,beta)4.

It catalyses the reaction hydrogencarbonate + L-glutamine + 2 ATP + H2O = carbamoyl phosphate + L-glutamate + 2 ADP + phosphate + 2 H(+). The enzyme catalyses L-glutamine + H2O = L-glutamate + NH4(+). The protein operates within amino-acid biosynthesis; L-arginine biosynthesis; carbamoyl phosphate from bicarbonate: step 1/1. It participates in pyrimidine metabolism; UMP biosynthesis via de novo pathway; (S)-dihydroorotate from bicarbonate: step 1/3. Its function is as follows. Small subunit of the glutamine-dependent carbamoyl phosphate synthetase (CPSase). CPSase catalyzes the formation of carbamoyl phosphate from the ammonia moiety of glutamine, carbonate, and phosphate donated by ATP, constituting the first step of 2 biosynthetic pathways, one leading to arginine and/or urea and the other to pyrimidine nucleotides. The small subunit (glutamine amidotransferase) binds and cleaves glutamine to supply the large subunit with the substrate ammonia. This chain is Carbamoyl phosphate synthase small chain, found in Polynucleobacter asymbioticus (strain DSM 18221 / CIP 109841 / QLW-P1DMWA-1) (Polynucleobacter necessarius subsp. asymbioticus).